The sequence spans 336 residues: Anthranilate phosphoribosyltransferase (336 aa).

5-phospho-alpha-D-ribose 1-diphosphate-binding positions include glycine 82, 85–86, threonine 90, 92–95, 110–118, and serine 122; these read GD, NIST, and KHGNRFASG. Glycine 82 provides a ligand contact to anthranilate. Serine 94 lines the Mg(2+) pocket. Asparagine 113 contacts anthranilate. Arginine 168 provides a ligand contact to anthranilate. Mg(2+) contacts are provided by aspartate 227 and glutamate 228.

The protein belongs to the anthranilate phosphoribosyltransferase family. As to quaternary structure, homodimer. The cofactor is Mg(2+).

The catalysed reaction is N-(5-phospho-beta-D-ribosyl)anthranilate + diphosphate = 5-phospho-alpha-D-ribose 1-diphosphate + anthranilate. The protein operates within amino-acid biosynthesis; L-tryptophan biosynthesis; L-tryptophan from chorismate: step 2/5. In terms of biological role, catalyzes the transfer of the phosphoribosyl group of 5-phosphorylribose-1-pyrophosphate (PRPP) to anthranilate to yield N-(5'-phosphoribosyl)-anthranilate (PRA). This is Anthranilate phosphoribosyltransferase from Desulfitobacterium hafniense (strain Y51).